A 149-amino-acid chain; its full sequence is Large ribosomal subunit protein bL9 (149 aa).

An N6-acetyllysine modification is found at Lys-89.

It belongs to the bacterial ribosomal protein bL9 family.

Binds to the 23S rRNA. The protein is Large ribosomal subunit protein bL9 of Shigella boydii serotype 18 (strain CDC 3083-94 / BS512).